The following is a 327-amino-acid chain: Ventral anterior homeobox 1 (327 aa).

Residues M1 to G34 show a composition bias toward basic and acidic residues. The disordered stretch occupies residues M1–T41. The segment at residues P99 to Q158 is a DNA-binding region (homeobox). Residues A230–A245 are compositionally biased toward low complexity. Residues A230–P249 form a disordered region.

It belongs to the EMX homeobox family.

Its subcellular location is the nucleus. Its function is as follows. Transcription factor that plays a role in establishing dorsal-ventral polarity in the neural retina. The chain is Ventral anterior homeobox 1 (VAX1) from Gallus gallus (Chicken).